Reading from the N-terminus, the 155-residue chain is Small ribosomal subunit protein uS7 (155 aa).

This sequence belongs to the universal ribosomal protein uS7 family. As to quaternary structure, part of the 30S ribosomal subunit. Contacts proteins S9 and S11.

Functionally, one of the primary rRNA binding proteins, it binds directly to 16S rRNA where it nucleates assembly of the head domain of the 30S subunit. Is located at the subunit interface close to the decoding center, probably blocks exit of the E-site tRNA. The polypeptide is Small ribosomal subunit protein uS7 (Thermotoga maritima (strain ATCC 43589 / DSM 3109 / JCM 10099 / NBRC 100826 / MSB8)).